The chain runs to 184 residues: Elongation factor P (184 aa).

Belongs to the elongation factor P family.

Its subcellular location is the cytoplasm. The protein operates within protein biosynthesis; polypeptide chain elongation. Its function is as follows. Involved in peptide bond synthesis. Stimulates efficient translation and peptide-bond synthesis on native or reconstituted 70S ribosomes in vitro. Probably functions indirectly by altering the affinity of the ribosome for aminoacyl-tRNA, thus increasing their reactivity as acceptors for peptidyl transferase. This is Elongation factor P from Verminephrobacter eiseniae (strain EF01-2).